Reading from the N-terminus, the 306-residue chain is MSEENKSVSTPCPPDKIIFDAERGEYICSETGEVLEDKIIDQGPEWRAFTPEEKEKRSRVGGPLNNTIHDRGLSTLIDWKDKDAMGRTLDPKRRLEALRWRKWQIRARIQSSIDRNLAQAMNELERIGNLLNLPKSVKDEAALIYRKAVEKGLVRGRSIESVVAAAIYAACRRMKLARTLDEIAQYTKANRKEVARCYRLLLRELDVSVPVSDPKDYVTRIANLLGLSGAVMKTAAEIIDKAKGSGLTAGKDPAGLAAAAIYIASLLHDERRTQKEIAQVAGVTEVTVRNRYKELTQELKISIPTQ.

Repeat copies occupy residues 122-205 and 216-297.

Belongs to the TFIIB family.

Its function is as follows. Stabilizes TBP binding to an archaeal box-A promoter. Also responsible for recruiting RNA polymerase II to the pre-initiation complex (DNA-TBP-TFIIB). This is Transcription initiation factor IIB from Saccharolobus shibatae (strain ATCC 51178 / DSM 5389 / JCM 8931 / NBRC 15437 / B12) (Sulfolobus shibatae).